A 359-amino-acid chain; its full sequence is Peptide chain release factor 1 (359 aa).

The residue at position 235 (Q235) is an N5-methylglutamine.

The protein belongs to the prokaryotic/mitochondrial release factor family. Methylated by PrmC. Methylation increases the termination efficiency of RF1.

The protein localises to the cytoplasm. Peptide chain release factor 1 directs the termination of translation in response to the peptide chain termination codons UAG and UAA. In Chelativorans sp. (strain BNC1), this protein is Peptide chain release factor 1.